Consider the following 97-residue polypeptide: Aspartyl/glutamyl-tRNA(Asn/Gln) amidotransferase subunit C (97 aa).

The protein belongs to the GatC family. In terms of assembly, heterotrimer of A, B and C subunits.

It carries out the reaction L-glutamyl-tRNA(Gln) + L-glutamine + ATP + H2O = L-glutaminyl-tRNA(Gln) + L-glutamate + ADP + phosphate + H(+). It catalyses the reaction L-aspartyl-tRNA(Asn) + L-glutamine + ATP + H2O = L-asparaginyl-tRNA(Asn) + L-glutamate + ADP + phosphate + 2 H(+). Its function is as follows. Allows the formation of correctly charged Asn-tRNA(Asn) or Gln-tRNA(Gln) through the transamidation of misacylated Asp-tRNA(Asn) or Glu-tRNA(Gln) in organisms which lack either or both of asparaginyl-tRNA or glutaminyl-tRNA synthetases. The reaction takes place in the presence of glutamine and ATP through an activated phospho-Asp-tRNA(Asn) or phospho-Glu-tRNA(Gln). In Prochlorococcus marinus (strain MIT 9313), this protein is Aspartyl/glutamyl-tRNA(Asn/Gln) amidotransferase subunit C.